We begin with the raw amino-acid sequence, 57 residues long: MAVQQNKPTRSKRGMRRSHDALTAVTSLSVDKTSGEKHLRHHITADGYYRGRKVIAK.

The interval 1–38 (MAVQQNKPTRSKRGMRRSHDALTAVTSLSVDKTSGEKH) is disordered.

This sequence belongs to the bacterial ribosomal protein bL32 family.

This is Large ribosomal subunit protein bL32 from Escherichia coli O7:K1 (strain IAI39 / ExPEC).